The sequence spans 299 residues: MKALDYKLLLALDAVMQEQNFERAAQRLHITQSAISQRIKQLEQQFAEPLLIRSQPLQATPLGQKLLAHYRQVRQLELELAGEIAPDEPQAPIRVSIAVNADSLATWFLPALAPLLEQHPIELNLLVDDECRTLDRVREGQAFGAVSLHGQPLAGCCVDELGEMRYLLTASPAFVARHFPAGLTPAALAKTPAVAFDQRDDMHVSFMARHFGLEPGGYPCHTVRSSEAFVAMAEQGLAYCLIPELQIRQQLAQGILLDLSPSHHLIEPLYWHRWVLERGLHKQISQRLISEGRRALQPG.

The HTH lysR-type domain maps to 4 to 60; it reads LDYKLLLALDAVMQEQNFERAAQRLHITQSAISQRIKQLEQQFAEPLLIRSQPLQAT. The H-T-H motif DNA-binding region spans 21-40; the sequence is FERAAQRLHITQSAISQRIK.

Belongs to the LysR transcriptional regulatory family. In terms of assembly, homodimer.

Functionally, controls the transcription of genes involved in arginine and lysine metabolism. The sequence is that of HTH-type transcriptional regulator ArgP from Aeromonas salmonicida.